A 1188-amino-acid chain; its full sequence is MSTHSGDSTKQQHYRSSDPYSGRRPIPTIPKFFRDRKQRAEKKEEQQREQTENEKLFDPITQRDVEINDVHFDYAKTYDDPSFTVPNQSIQGSSLPSEKPYLSSNQPTNVYKQHQDDLAPPEADNQITRDVPISDEKTNILFFPSPSIDLSYVSKEVKQKTGQYSLFAYIFSLVISWFFTHSIIISAVLPLAISSCMYLWMQNIYAVAKDAEWGAEQKRGEYARLNLIPESAEWMNHLLEKVWPLINPEMFSSVADQIEDVMQASIPSFVENVRVASLDQGSHPVRVVSIRSLPSGEASESFSEKQASEAEHKDEPEQQRKQFYNFELCLAYHAKPVEDATSTSARASNLHLRIVFYPGIKGTVGFPLPIWVEIKGFVARIRFRCELMPEVPFLKNVTFSLMGLPELNVSAVPVAEGGVNIFGLPLISKFVNDAISAAANEYVSPKSMTIDLSKTLLGDDIKKEVNALGVIFVHINRAEDLSKQDVNGLSDAYITVGFHKFGKPLYCTRVVKQDLNPIWNEYAFIPVFPDQVKAGEKISIELWDSDRFSPDDVVGRTKIGLHLLIQDSGKMHERCDTLTGISEDTSLPGRVFYEIGYFPRAEFKPSLKTSGHDITIPRSMRDDPAFQNPHGSLDNKEEEAAVTTAPDEEYPSGILSFTVHQAVNLQMNHPTGTFGNVSGNYNTSPAQSVGDVTAEEGSELPSSYVCVDLDDTLVYKTRTKVFTSNPIYNAGSEKFVKDWRNAMLCFTVRDFKLREHDSILGVVNIPLATTLTTSSQLTKWYPIQGGIGFGSVRISILFRSMKLKIPRNLLGWDIGTLEFMDRQIVAEGTGSVSDVSFSSIRVNIAGVKITAKSSTSNSSSTAEYHVRSRHAVIPVNNRYRSAVVFEFRKQLQRKHNVFAMVWLVDLEDNVEQNIRVPIFTSSKPAHVLQNMIDFDHPDKESEFKIIGYLSTRICFHRGLDDSHEQLVDNDDEAAIFETYRCLKSMGLRRGYVKDMKNPLADQRASLDESRETTTASSKFESDDSVDTEDEETTTDRTPIECTQTVSMVDPNVNGDIQGRNSLGTMNSNERNLEQEFISLGYASKNRPKAHAQEGTNQPGASENVEPVLADDSDAVTIHSNISSDDQKRKLVNADDRELEKRLHRGPYNSKIVRTGEWVKDGAKMGWRNLRRKFALNGRQPDVETEISK.

Polar residues predominate over residues 1-11 (MSTHSGDSTKQ). Disordered stretches follow at residues 1 to 61 (MSTH…DPIT) and 83 to 125 (FTVP…EADN). Residues 41-61 (EKKEEQQREQTENEKLFDPIT) are compositionally biased toward basic and acidic residues. Over residues 84–112 (TVPNQSIQGSSLPSEKPYLSSNQPTNVYK) the composition is skewed to polar residues. A helical membrane pass occupies residues 173–193 (LVISWFFTHSIIISAVLPLAI). An SMP-LTD domain is found at 228–453 (IPESAEWMNH…SPKSMTIDLS (226 aa)). The tract at residues 298–318 (ASESFSEKQASEAEHKDEPEQ) is disordered. A compositionally biased stretch (basic and acidic residues) spans 302–318 (FSEKQASEAEHKDEPEQ). C2 domains lie at 451 to 576 (DLSK…ERCD) and 636 to 781 (KEEE…TKWY). Ca(2+) contacts are provided by D485, D491, D544, D546, S549, and D552. Disordered regions lie at residues 615 to 639 (TIPRSMRDDPAFQNPHGSLDNKEEE) and 1002 to 1066 (QRAS…GTMN). S1005 is subject to Phosphoserine. A compositionally biased stretch (acidic residues) spans 1022-1032 (DDSVDTEDEET).

Requires Ca(2+) as cofactor.

The protein localises to the cytoplasm. It is found in the endoplasmic reticulum membrane. It localises to the nucleus membrane. Its subcellular location is the cytoskeleton. The protein resides in the microtubule organizing center. The protein localises to the spindle pole body. Functionally, has a role in meiosis. In Schizosaccharomyces pombe (strain 972 / ATCC 24843) (Fission yeast), this protein is Meiotically up-regulated gene 190 protein (mug190).